A 429-amino-acid chain; its full sequence is D-amino acid dehydrogenase (429 aa).

3–17 (VLILGSGVIGVTSAW) is a binding site for FAD.

Belongs to the DadA oxidoreductase family. The cofactor is FAD.

The enzyme catalyses a D-alpha-amino acid + A + H2O = a 2-oxocarboxylate + AH2 + NH4(+). Oxidative deamination of D-amino acids. The protein is D-amino acid dehydrogenase of Xanthomonas axonopodis pv. citri (strain 306).